Here is a 369-residue protein sequence, read N- to C-terminus: Cobalt-precorrin-5B C(1)-methyltransferase (369 aa).

The protein belongs to the CbiD family.

The catalysed reaction is Co-precorrin-5B + S-adenosyl-L-methionine = Co-precorrin-6A + S-adenosyl-L-homocysteine. The protein operates within cofactor biosynthesis; adenosylcobalamin biosynthesis; cob(II)yrinate a,c-diamide from sirohydrochlorin (anaerobic route): step 6/10. Catalyzes the methylation of C-1 in cobalt-precorrin-5B to form cobalt-precorrin-6A. The chain is Cobalt-precorrin-5B C(1)-methyltransferase from Geobacter metallireducens (strain ATCC 53774 / DSM 7210 / GS-15).